The primary structure comprises 468 residues: Nuclear distribution protein PAC1-2 (468 aa).

The LisH domain maps to 13–45; that stretch reads QAEELHKSIIAYLTSLNLATTANTLRAELNLPE. Residues 66-92 are a coiled coil; sequence SVIRLQKKVLDLQAENAHLKNEIENAG. 8 WD repeats span residues 118-159, 161-201, 205-251, 254-293, 298-358, 360-399, 404-429, and 430-468; these read GHRL…RTLK, HTKA…KNIR, GHDH…CVKT, GHNDWPRAVAPSADGRWLLSTGSDKAARLWDIGGTEPECR, GHEN…IKVL, GHDNWVRGLAFHPAGKFLISVADDRTMRCWDLSQDGKCVQ, MFDGFVSCVRWAPGITKDGLAGGDAG, and DGTPKKKTGAEANGGVQMRCVVATGSVDGTEGKVRIFAN.

This sequence belongs to the WD repeat LIS1/nudF family. Self-associates. Interacts with NDL1 and dynein.

The protein localises to the cytoplasm. The protein resides in the cytoskeleton. It localises to the spindle pole. Positively regulates the activity of the minus-end directed microtubule motor protein dynein. May enhance dynein-mediated microtubule sliding by targeting dynein to the microtubule plus end. Required for nuclear migration during vegetative growth as well as development. Required for retrograde early endosome (EE) transport from the hyphal tip. Required for localization of dynein to the mitotic spindle poles. Recruits additional proteins to the dynein complex at SPBs. The chain is Nuclear distribution protein PAC1-2 from Podospora anserina (strain S / ATCC MYA-4624 / DSM 980 / FGSC 10383) (Pleurage anserina).